A 166-amino-acid polypeptide reads, in one-letter code: Lipoprotein signal peptidase (166 aa).

Transmembrane regions (helical) follow at residues 12-32 (WLWL…LILQ), 70-90 (WFFA…MYRS), and 102-122 (ALII…GFVV). Residues aspartate 123 and aspartate 141 contribute to the active site. Residues 137–157 (FNLADSAICIGAALIVLEGFL) traverse the membrane as a helical segment.

It belongs to the peptidase A8 family.

It is found in the cell inner membrane. It carries out the reaction Release of signal peptides from bacterial membrane prolipoproteins. Hydrolyzes -Xaa-Yaa-Zaa-|-(S,diacylglyceryl)Cys-, in which Xaa is hydrophobic (preferably Leu), and Yaa (Ala or Ser) and Zaa (Gly or Ala) have small, neutral side chains.. Its pathway is protein modification; lipoprotein biosynthesis (signal peptide cleavage). Functionally, this protein specifically catalyzes the removal of signal peptides from prolipoproteins. The sequence is that of Lipoprotein signal peptidase from Salmonella agona (strain SL483).